A 468-amino-acid polypeptide reads, in one-letter code: MPPWGAALALILAVLALLGLLGPRLRGPWGRAVGERTLPGAQDRDDGEEADGGGPADQFSDGREPLPGGCSLVCKPSALAQCLLRALRRSEALEAGPRSWFSGPHLQTLCHFVLPVAPGPELAREYLQLADDGLVALDWVVGPCVRGRRITSAGGLPAVLLVIPNAWGRLTRNVLGLCLLALERGYYPVIFHRRGHHGCPLVSPRLQPFGDPSDLKEAVTYIRFRHPAAPLFAVSEGSGSALLLSYLGECGSSSYVTGAACISPVLRCREWFEAGLPWPYERGFLLHQKIALSRYATALEDTVDTSRLFRSRSLREFEEALFCHTKSFPISWDTYWDRNDPLRDVDEAAVPVLCICSADDPVCGPPDHTLTTELFHSNPYFFLLLSRHGGHCGFLRQEPLPAWSHEVILESFRALTEFFRTEERIKGLSRHRASFLGGRRRGGALQRREVSSSSNLEEIFNWKRSYTR.

An N-terminal signal peptide occupies residues 1 to 23 (MPPWGAALALILAVLALLGLLGP). Residues 33–61 (VGERTLPGAQDRDDGEEADGGGPADQFSD) are disordered. Active-site charge relay system residues include Asp-360 and His-391. Ser-434 carries the phosphoserine modification.

It belongs to the AB hydrolase superfamily. AB hydrolase 4 family. As to quaternary structure, interacts with PDE3B; this interaction regulates PDE3B's stability and expression and, thereby, impacts the antilipolytic action of insulin.

It is found in the secreted. In terms of biological role, may regulate adipocyte lipolysis and liver lipid accumulation. The polypeptide is Protein ABHD15 (Homo sapiens (Human)).